The following is a 516-amino-acid chain: 2-isopropylmalate synthase (516 aa).

The Pyruvate carboxyltransferase domain occupies 8 to 270 (IYIFDTTLRD…YTGIKTESIY (263 aa)). Residues aspartate 17, histidine 205, histidine 207, and asparagine 241 each contribute to the Mn(2+) site. Residues 394–516 (KLIYLNVVSG…DAGKIKSEYE (123 aa)) form a regulatory domain region.

This sequence belongs to the alpha-IPM synthase/homocitrate synthase family. LeuA type 1 subfamily. As to quaternary structure, homodimer. It depends on Mn(2+) as a cofactor.

The protein resides in the cytoplasm. The catalysed reaction is 3-methyl-2-oxobutanoate + acetyl-CoA + H2O = (2S)-2-isopropylmalate + CoA + H(+). The protein operates within amino-acid biosynthesis; L-leucine biosynthesis; L-leucine from 3-methyl-2-oxobutanoate: step 1/4. Its function is as follows. Catalyzes the condensation of the acetyl group of acetyl-CoA with 3-methyl-2-oxobutanoate (2-ketoisovalerate) to form 3-carboxy-3-hydroxy-4-methylpentanoate (2-isopropylmalate). The protein is 2-isopropylmalate synthase of Syntrophus aciditrophicus (strain SB).